We begin with the raw amino-acid sequence, 652 residues long: Acetolactate synthase 3, chloroplastic (652 aa).

The segment covering M1–S20 has biased composition (polar residues). The segment at M1 to P23 is disordered. A chloroplast-targeting transit peptide spans M1–F69. E126 is a thiamine diphosphate binding site. FAD contacts are provided by residues R228, H334–R355, and D377–D396. The thiamine pyrophosphate binding stretch occupies residues Q469–H549. Mg(2+) is bound by residues D520 and N547.

The protein belongs to the TPP enzyme family. The cofactor is Mg(2+). It depends on thiamine diphosphate as a cofactor.

The protein resides in the plastid. Its subcellular location is the chloroplast. The enzyme catalyses 2 pyruvate + H(+) = (2S)-2-acetolactate + CO2. It participates in amino-acid biosynthesis; L-isoleucine biosynthesis; L-isoleucine from 2-oxobutanoate: step 1/4. The protein operates within amino-acid biosynthesis; L-valine biosynthesis; L-valine from pyruvate: step 1/4. The protein is Acetolactate synthase 3, chloroplastic of Brassica napus (Rape).